Consider the following 639-residue polypeptide: DNA gyrase subunit B (639 aa).

Basic and acidic residues predominate over residues 392-402; sequence QAEELTRRKSA. The segment at 392-417 is disordered; that stretch reads QAEELTRRKSALESTSLPGKLADCQS. A Toprim domain is found at 423-537; it reads SELFIVEGDS…AGYVYAAQPP (115 aa). 3 residues coordinate Mg(2+): Glu-429, Asp-502, and Asp-504.

The protein belongs to the type II topoisomerase GyrB family. Heterotetramer, composed of two GyrA and two GyrB chains. In the heterotetramer, GyrA contains the active site tyrosine that forms a transient covalent intermediate with DNA, while GyrB binds cofactors and catalyzes ATP hydrolysis. It depends on Mg(2+) as a cofactor. The cofactor is Mn(2+). Ca(2+) is required as a cofactor.

Its subcellular location is the cytoplasm. It catalyses the reaction ATP-dependent breakage, passage and rejoining of double-stranded DNA.. In terms of biological role, a type II topoisomerase that negatively supercoils closed circular double-stranded (ds) DNA in an ATP-dependent manner to modulate DNA topology and maintain chromosomes in an underwound state. Negative supercoiling favors strand separation, and DNA replication, transcription, recombination and repair, all of which involve strand separation. Also able to catalyze the interconversion of other topological isomers of dsDNA rings, including catenanes and knotted rings. Type II topoisomerases break and join 2 DNA strands simultaneously in an ATP-dependent manner. This chain is DNA gyrase subunit B, found in Haloferax lucentense (strain DSM 14919 / JCM 9276 / NCIMB 13854 / Aa 2.2) (Haloferax alicantei).